The chain runs to 530 residues: Ubiquitin carboxyl-terminal hydrolase 17-like protein 12 (530 aa).

The region spanning A80–K375 is the USP domain. The active-site Nucleophile is the C89. The active-site Proton acceptor is H334. Basic and acidic residues-rich tracts occupy residues S382–R392 and D398–H412. Disordered stretches follow at residues S382 to H412 and N477 to Q530. Low complexity predominate over residues S484–T495. Over residues H496–L505 the composition is skewed to polar residues. Positions G510–R524 are enriched in basic residues.

This sequence belongs to the peptidase C19 family. USP17 subfamily.

It is found in the nucleus. The protein localises to the endoplasmic reticulum. The catalysed reaction is Thiol-dependent hydrolysis of ester, thioester, amide, peptide and isopeptide bonds formed by the C-terminal Gly of ubiquitin (a 76-residue protein attached to proteins as an intracellular targeting signal).. Its function is as follows. Deubiquitinating enzyme that removes conjugated ubiquitin from specific proteins to regulate different cellular processes that may include cell proliferation, progression through the cell cycle, apoptosis, cell migration, and the cellular response to viral infection. The chain is Ubiquitin carboxyl-terminal hydrolase 17-like protein 12 (USP17L12) from Homo sapiens (Human).